The sequence spans 235 residues: MKQKYWNINLEEMMEAGIHFGHQAAKWNPKMKPYIFTERRGIHILNVTKTARLLSEACDFVANAASKGKQFLIVGTKYQAADLVASAALKARCHYVNQKWLGGMLTNWSTIEKRLRKFEDLQTKKNMGALDELPKKEAANLERQLAQLQKYLGGIRYMTNLPDIVIIVDQQKELTAIRECINLNIPTICLVDTDCDPDLTDISIPANDDARASIRWVLDKLTSAIQEGRCNSTKI.

It belongs to the universal ribosomal protein uS2 family.

It localises to the plastid. It is found in the chloroplast. The sequence is that of Small ribosomal subunit protein uS2c (rps2) from Anthoceros angustus (Hornwort).